A 586-amino-acid polypeptide reads, in one-letter code: Glutamate--tRNA ligase (586 aa).

Residues 114-124 (PNPNGPWHVGH) carry the 'HIGH' region motif. Basic and acidic residues-rich tracts occupy residues 431 to 443 (ARGE…HEAV) and 459 to 468 (HPEHPDRGDR). The segment at 431 to 468 (ARGEGPEESHEAVEVPVDDGPDEATPQVHPEHPDRGDR) is disordered.

This sequence belongs to the class-I aminoacyl-tRNA synthetase family. Glutamate--tRNA ligase type 2 subfamily.

The protein resides in the cytoplasm. It catalyses the reaction tRNA(Glu) + L-glutamate + ATP = L-glutamyl-tRNA(Glu) + AMP + diphosphate. Functionally, catalyzes the attachment of glutamate to tRNA(Glu) in a two-step reaction: glutamate is first activated by ATP to form Glu-AMP and then transferred to the acceptor end of tRNA(Glu). This chain is Glutamate--tRNA ligase, found in Halobacterium salinarum (strain ATCC 29341 / DSM 671 / R1).